The following is a 597-amino-acid chain: uncharacterized protein (597 aa).

The Helicase ATP-binding domain maps to Leu48–Thr198. Position 61 to 68 (Tyr61 to Thr68) interacts with ATP. The DEVH box signature appears at Asp146 to His149. A Helicase C-terminal domain is found at Lys275–Val467.

Belongs to the helicase family.

In terms of biological role, the presence of the two linear plasmids, termed pGKL1 and pGKL2, in strains of Kluyveromyces lactis confers the killer phenotype to the host cell, by promoting the secretion of a toxin able to inhibit the growth of sensitive strains. This is an uncharacterized protein from Kluyveromyces lactis (strain ATCC 8585 / CBS 2359 / DSM 70799 / NBRC 1267 / NRRL Y-1140 / WM37) (Yeast).